The primary structure comprises 259 residues: Cytosolic Fe-S cluster assembly factor Nubp2 homolog (259 aa).

14-21 is a binding site for ATP; it reads GKGGVGKS. Positions 188 and 191 each coordinate [4Fe-4S] cluster.

This sequence belongs to the Mrp/NBP35 ATP-binding proteins family. NUBP2/CFD1 subfamily. Heterotetramer of 2 Nubp1 and 2 Nubp2 chains. [4Fe-4S] cluster is required as a cofactor.

It localises to the cytoplasm. In terms of biological role, component of the cytosolic iron-sulfur (Fe/S) protein assembly (CIA) machinery. Required for maturation of extramitochondrial Fe-S proteins. The Nubp1-Nubp2 heterotetramer forms a Fe-S scaffold complex, mediating the de novo assembly of an Fe-S cluster and its transfer to target apoproteins. The protein is Cytosolic Fe-S cluster assembly factor Nubp2 homolog of Aedes aegypti (Yellowfever mosquito).